Consider the following 136-residue polypeptide: UPF0213 protein ASA_0550 (136 aa).

One can recognise a GIY-YIG domain in the interval 17–92 (GQWSIYLVRT…KQQSKAFKER (76 aa)).

It belongs to the UPF0213 family.

In Aeromonas salmonicida (strain A449), this protein is UPF0213 protein ASA_0550.